The sequence spans 94 residues: Trp operon repressor homolog (94 aa).

The DNA-binding element occupies 58–81 (QREIAEKYGVSIAQITRGSNALKG).

It belongs to the TrpR family. Homodimer.

The protein resides in the cytoplasm. In terms of biological role, this protein is an aporepressor. When complexed with L-tryptophan it binds the operator region of the trp operon and prevents the initiation of transcription. The protein is Trp operon repressor homolog of Chlamydia trachomatis serovar L2 (strain ATCC VR-902B / DSM 19102 / 434/Bu).